The primary structure comprises 342 residues: UDP-3-O-acylglucosamine N-acyltransferase (342 aa).

Histidine 253 functions as the Proton acceptor in the catalytic mechanism.

It belongs to the transferase hexapeptide repeat family. LpxD subfamily. Homotrimer.

The enzyme catalyses a UDP-3-O-[(3R)-3-hydroxyacyl]-alpha-D-glucosamine + a (3R)-hydroxyacyl-[ACP] = a UDP-2-N,3-O-bis[(3R)-3-hydroxyacyl]-alpha-D-glucosamine + holo-[ACP] + H(+). It participates in bacterial outer membrane biogenesis; LPS lipid A biosynthesis. Catalyzes the N-acylation of UDP-3-O-acylglucosamine using 3-hydroxyacyl-ACP as the acyl donor. Is involved in the biosynthesis of lipid A, a phosphorylated glycolipid that anchors the lipopolysaccharide to the outer membrane of the cell. The protein is UDP-3-O-acylglucosamine N-acyltransferase of Rickettsia canadensis (strain McKiel).